Here is a 490-residue protein sequence, read N- to C-terminus: Cysteine--tRNA ligase (490 aa).

A Zn(2+)-binding site is contributed by C36. The 'HIGH' region motif lies at 38 to 48; it reads VTVYDYSHIGH. Zn(2+) contacts are provided by C216, H241, and E245. The 'KMSKS' region signature appears at 278–282; it reads KMSKS. Residue K281 participates in ATP binding.

This sequence belongs to the class-I aminoacyl-tRNA synthetase family. As to quaternary structure, monomer. It depends on Zn(2+) as a cofactor.

It is found in the cytoplasm. It catalyses the reaction tRNA(Cys) + L-cysteine + ATP = L-cysteinyl-tRNA(Cys) + AMP + diphosphate. This is Cysteine--tRNA ligase from Magnetococcus marinus (strain ATCC BAA-1437 / JCM 17883 / MC-1).